The chain runs to 215 residues: Pyrophosphatase PpaX (215 aa).

Residue Asp-9 is the Nucleophile of the active site.

This sequence belongs to the HAD-like hydrolase superfamily. PpaX family. Mg(2+) is required as a cofactor.

The catalysed reaction is diphosphate + H2O = 2 phosphate + H(+). In terms of biological role, hydrolyzes pyrophosphate formed during P-Ser-HPr dephosphorylation by HPrK/P. Might play a role in controlling the intracellular pyrophosphate pool. The chain is Pyrophosphatase PpaX from Bacillus mycoides (strain KBAB4) (Bacillus weihenstephanensis).